Here is a 472-residue protein sequence, read N- to C-terminus: 4-O-methyl-glucuronoyl methylesterase 1 (472 aa).

A signal peptide spans 1–20 (MKSAAYLAALAAVLPAYVNA). The CBM1 domain maps to 21-56 (QAQEWGQCGGIGWTGATTCVSGTVCTVLNPYYSQCL). Positions 62–97 (TAPPPPPPPPTSVSSSSSSSTSSAPPSGPSGTSPTC) are disordered. Residues 63-72 (APPPPPPPPT) show a composition bias toward pro residues. A compositionally biased stretch (low complexity) spans 73 to 96 (SVSSSSSSSTSSAPPSGPSGTSPT). Disulfide bonds link Cys-97–Cys-131, Cys-283–Cys-419, and Cys-315–Cys-391. The short motif at 282–287 (GCSRDG) is the GXSYXG catalytic site motif element. Ser-284 acts as the Nucleophile in catalysis. Positions 288, 330, 338, and 382 each coordinate substrate. The active-site Proton donor/acceptor is the His-418. Asn-465 carries N-linked (GlcNAc...) asparagine glycosylation.

The protein belongs to the carbohydrate esterase 15 (CE15) family.

It localises to the secreted. The enzyme catalyses a 4-O-methyl-alpha-D-glucuronosyl ester derivative + H2O = 4-O-methyl-alpha-D-glucuronate derivative + an alcohol + H(+). Glucuronoyl esterase which may play a significant role in biomass degradation, as it is considered to disconnect hemicellulose from lignin through the hydrolysis of the ester bond between 4-O-methyl-D-glucuronic acid residues of glucuronoxylans and aromatic alcohols of lignin. Can hydrolyze benzyl glucuronic acid (BnGlcA), allyl glucuronic acid (allylGlcA) and to a lower degree methyl glucuronic acid (MeGlcA) in vitro. The chain is 4-O-methyl-glucuronoyl methylesterase 1 from Phanerochaete chrysosporium (strain RP-78 / ATCC MYA-4764 / FGSC 9002) (White-rot fungus).